Reading from the N-terminus, the 616-residue chain is Protein decapentaplegic (616 aa).

Positions 1–23 are cleaved as a signal peptide; it reads MRAWILLLAVLATSQPIVQVAST. The propeptide occupies 24 to 474; it reads EDTSISQRFI…DGRHKARSIR (451 aa). Residues 80–188 are disordered; it reads SDSDSDNNNN…TSTESHQSPI (109 aa). The span at 86–105 shows a compositional bias: low complexity; it reads NNNNNYKNRNNNNNNLNKGP. Over residues 106–115 the composition is skewed to basic residues; sequence RNNKNKGNKH. Basic and acidic residues predominate over residues 116 to 139; the sequence is SKSDANRQFNEVHKPRTDQLENSK. An N-linked (GlcNAc...) asparagine glycan is attached at N147. Positions 173–188 are enriched in polar residues; the sequence is ATTTALTSTESHQSPI. 2 N-linked (GlcNAc...) asparagine glycosylation sites follow: N360 and N395. The segment at 470–512 is disordered; the sequence is ARSIRDVSGGGGGGGGAGEGGKGNGGGRNRRHQRRPARRKNHE. Gly residues predominate over residues 477-496; the sequence is SGGGGGGGGAGEGGKGNGGG. Basic residues predominate over residues 497-509; it reads RNRRHQRRPARRK. 3 disulfides stabilise this stretch: C515/C581, C544/C613, and C548/C615. N-linked (GlcNAc...) asparagine glycosylation occurs at N557.

It belongs to the TGF-beta family. In terms of assembly, heterodimers of scw/dpp are the active subunit, dpp/dpp homodimers elicit a basal response and scw/scw homodimers alone are ineffective in specifying a dorsal pattern. In terms of tissue distribution, expressed in the imaginal discs associated with establishment of the proximal-distal axis of the appendages, and midgut mesoderm.

Its subcellular location is the secreted. Its function is as follows. Acts as an extracellular morphogen to establish at least two cellular response thresholds within the dorsal half of the drosophila embryo. Required for the proper development of the embryonic dorsal hypoderm, for viability of larvae and for cell viability of the epithelial cells in the imaginal disks. Acts together with scw. The protein is Protein decapentaplegic (dpp) of Drosophila pseudoobscura pseudoobscura (Fruit fly).